A 169-amino-acid chain; its full sequence is Probable RNA-binding protein EIF1AD (169 aa).

In terms of domain architecture, S1-like spans 14 to 89 (VLGDYVQPTE…VKAEIAFILY (76 aa)). Residues 115–169 (AKEKESSGIQSTEAQAKPQGEDSETDDDSGLFVNTNHVHYEDSEEESESEEDEEN) are disordered. Acidic residues predominate over residues 156–169 (DSEEESESEEDEEN).

Belongs to the EIF1AD family.

Its subcellular location is the nucleus. In terms of biological role, may play a role into cellular response to oxidative stress. May decrease cell proliferation. The protein is Probable RNA-binding protein EIF1AD (eif1ad) of Xenopus laevis (African clawed frog).